The sequence spans 208 residues: Putative dioxygenase RBE_0329 (208 aa).

This sequence belongs to the intradiol ring-cleavage dioxygenase family.

The chain is Putative dioxygenase RBE_0329 from Rickettsia bellii (strain RML369-C).